Here is a 185-residue protein sequence, read N- to C-terminus: Translocon-associated protein subunit gamma (185 aa).

Position 1 is an N-acetylmethionine (M1). Residues 1 to 27 lie on the Lumenal side of the membrane; sequence MAPKGSCKQQSEEDLLLQDFSRNLSAK. S11 bears the Phosphoserine mark. A helical membrane pass occupies residues 28-48; sequence SSALFFGNAFIVSAIPIWLYW. Topologically, residues 49–54 are cytoplasmic; that stretch reads RIWHMD. Residues 55 to 76 traverse the membrane as a helical segment; sequence LIQSAVLYSVMTLVSTYLVAFA. Topologically, residues 77 to 135 are lumenal; that stretch reads YKNVKFVLKHKVAQKREDAVSKEVTRKLSEADNRKMSRKEKDERILWKKNEVADYEATT. S105 carries the phosphoserine modification. The helical transmembrane segment at 136–157 threads the bilayer; the sequence is FSIFYNNTLFLVVVIVASFFIL. The Cytoplasmic portion of the chain corresponds to 158–163; sequence KNFNPT. A helical membrane pass occupies residues 164–184; the sequence is VNYILSISASSGLIALLSTGS.

It belongs to the TRAP-gamma family. Heterotetramer of TRAP-alpha, TRAP-beta, TRAP-delta and TRAP-gamma.

It localises to the endoplasmic reticulum membrane. TRAP proteins are part of a complex whose function is to bind calcium to the ER membrane and thereby regulate the retention of ER resident proteins. This Pongo abelii (Sumatran orangutan) protein is Translocon-associated protein subunit gamma (SSR3).